The sequence spans 421 residues: MFSKAFLSAALLGAAAVEGHMMMAQPVPYGKDTLNNSPLAADGSDFPCKLRSNTYQVTEENTAAIGQSMPLSFIGSAVHGGGSCQVSLTTDREPTKDSKWIVIKSIEGGCPANVDGNLSGGPTSTGASKFTYTIPEGIEPGKYTLAWTWFNRIGNREMYMNCAPLTVTGSSSKRDEVPKEKTVEKRSANFPPMFVANVNGCTTKEGVDIRFPNPGSIVEYAGDKSNLAAEGSQACTGTPTFGGDGNTAGSSGSSGSSSGSSSGGSSSSAAGSGATAPPAPAVSSTLVPKPSQSSAPGVFVPTGSPAQPTHTSAPSGGSSSGSGSSSGSNSGSSSGSSSSSSSSSSSGALTGSCSSEGTWNCIGGSSFQRCANGQWTAVQQMATGTECTAGQASNLKIKATNLKPRMLHEMRHRKRNYHNHA.

Positions 1-19 (MFSKAFLSAALLGAAAVEG) are cleaved as a signal peptide. The Cu(+) site is built by H20, H79, and E93. Cystine bridges form between C48-C162, C84-C110, and C201-C235. Residue N117 is glycosylated (N-linked (GlcNAc...) asparagine). A disordered region spans residues 231 to 349 (GSQACTGTPT…SSSSSSSGAL (119 aa)). Low complexity predominate over residues 247-285 (TAGSSGSSGSSSGSSSGGSSSSAAGSGATAPPAPAVSST). The span at 304 to 314 (SPAQPTHTSAP) shows a compositional bias: polar residues. Positions 315–349 (SGGSSSGSGSSSGSNSGSSSGSSSSSSSSSSSGAL) are enriched in low complexity.

This sequence belongs to the polysaccharide monooxygenase AA11 family. Cu(2+) serves as cofactor.

Lytic polysaccharide monooxygenase (LPMO) that depolymerizes chitin via the oxidation of scissile beta-(1-4)-glycosidic bonds, yielding C1 or C4 oxidation products. Catalysis by LPMOs requires the reduction of the active-site copper from Cu(II) to Cu(I) by a reducing agent and H(2)O(2) or O(2) as a cosubstrate. Active on chitin but has no activity on other substrates, including diverse mannans, cellulose and starch (data not shown). Primary chain cleavage yields predominantly aldonic acid oligosaccharides with even-numbered degrees of polymerization. This Aspergillus oryzae (strain ATCC 42149 / RIB 40) (Yellow koji mold) protein is AA11 family lytic polysaccharide monooxygenase.